Here is a 614-residue protein sequence, read N- to C-terminus: DNA-directed DNA polymerase (614 aa).

The protein belongs to the DNA polymerase type-A family.

It catalyses the reaction DNA(n) + a 2'-deoxyribonucleoside 5'-triphosphate = DNA(n+1) + diphosphate. In terms of biological role, replicates viral genomic DNA. This polymerase possesses two enzymatic activities: DNA synthesis (polymerase) and an exonucleolytic activity that degrades single-stranded DNA in the 3'-5' direction. In Escherichia coli (Escherichia coli phage phi32), this protein is DNA-directed DNA polymerase.